We begin with the raw amino-acid sequence, 1885 residues long: Chitin synthase 5 (1885 aa).

The Myosin motor domain maps to 1-789 (MATRGNVPAH…SIALTGSQAA (789 aa)). 99–106 (GESGSGKT) lines the ATP pocket. Residues Asn219 and Asn429 are each glycosylated (N-linked (GlcNAc...) asparagine). The segment at 601–649 (KPLRMPSVSRKKHDQLRRMASRRADRSPAPQEEEPLPGTEEAKVRRTKP) is disordered. A compositionally biased stretch (basic residues) spans 609–621 (SRKKHDQLRRMAS). Residues 666-690 (LDNITKSLTAPNVNNYFVFCLKPND) form an actin-binding region. Residue Asn668 is glycosylated (N-linked (GlcNAc...) asparagine). The segment at 794–817 (GDIGSPSRPDTPGHNPFSDSKARL) is disordered. 2 helical membrane passes run 894-914 (WLAI…KWIG) and 929-949 (FAIN…IIVF). The Cytochrome b5 heme-binding domain maps to 957-1016 (QNVYSAAELSAHDGKGKHSAYVAIRGQVFDLGAFMPNHYPKIIPQSSLKKYAGVDATGLF). 2 N-linked (GlcNAc...) asparagine glycosylation sites follow: Asn1043 and Asn1068. Residues 1205 to 1225 (ILLAVSILLCSVIGFKFFAAL) traverse the membrane as a helical segment. N-linked (GlcNAc...) asparagine glycosylation is found at Asn1462 and Asn1568. Helical transmembrane passes span 1599-1619 (LLST…IVLL), 1626-1646 (VPLT…IIFI), and 1653-1673 (MIGW…GLPL). N-linked (GlcNAc...) asparagine glycans are attached at residues Asn1759 and Asn1790. Residues 1827 to 1882 (LPTDDMLLNEIRDILRTADLMTVTKKGIKQELERRFNVNLDMKRAYIGSATEAILS) form the DEK-C domain.

The protein in the N-terminal section; belongs to the TRAFAC class myosin-kinesin ATPase superfamily. Myosin family. This sequence in the C-terminal section; belongs to the chitin synthase family. Class V subfamily. Post-translationally, maximal activity requires trypsin activation, suggesting a zymogenic nature.

The protein localises to the cell membrane. It localises to the membrane. It catalyses the reaction [(1-&gt;4)-N-acetyl-beta-D-glucosaminyl](n) + UDP-N-acetyl-alpha-D-glucosamine = [(1-&gt;4)-N-acetyl-beta-D-glucosaminyl](n+1) + UDP + H(+). Functionally, polymerizes chitin, a structural polymer of the cell wall and septum, by transferring the sugar moiety of UDP-GlcNAc to the non-reducing end of the growing chitin polymer. CHS5 is required for the sustained growth at 37 degrees Celsius and is of critical importance for virulence. Especially important at infection temperatures for maintaining the cell wall integrity of developing yeast buds, elongating tips of hyphae, and random sites of expansion in sclerotic forms. The sequence is that of Chitin synthase 5 from Exophiala dermatitidis (Black yeast-like fungus).